A 424-amino-acid polypeptide reads, in one-letter code: Putative polyketide beta-ketoacyl synthase 2 (424 aa).

A Ketosynthase family 3 (KS3) domain is found at 13-416; the sequence is SRRAVVTGLG…GSNSALVLRR (404 aa).

This sequence belongs to the thiolase-like superfamily. Beta-ketoacyl-ACP synthases family.

Involved in developmentally regulated synthesis of a compound biosynthetically related to polyketide antibiotics which is essential for spore color in Streptomyces coelicolor. The chain is Putative polyketide beta-ketoacyl synthase 2 from Streptomyces coelicolor (strain ATCC BAA-471 / A3(2) / M145).